An 869-amino-acid chain; its full sequence is DNA mismatch repair protein MutS (869 aa).

Gly619–Ser626 contributes to the ATP binding site.

The protein belongs to the DNA mismatch repair MutS family.

Its function is as follows. This protein is involved in the repair of mismatches in DNA. It is possible that it carries out the mismatch recognition step. This protein has a weak ATPase activity. The chain is DNA mismatch repair protein MutS from Caldanaerobacter subterraneus subsp. tengcongensis (strain DSM 15242 / JCM 11007 / NBRC 100824 / MB4) (Thermoanaerobacter tengcongensis).